The sequence spans 118 residues: MVRIAGVNVPDRKHAVIALMSIYGIGRSRAKLICLSIGVDEYTKIGQLSDVYIDKMRNEIAKYVVEGDLRREVTLNIKRLIDLGTYRGLRHRRNLPVRGQRTRTNARTRKGPKKLINK.

Residues 95 to 118 (LPVRGQRTRTNARTRKGPKKLINK) are disordered.

This sequence belongs to the universal ribosomal protein uS13 family. Part of the 30S ribosomal subunit. Forms a loose heterodimer with protein S19. Forms two bridges to the 50S subunit in the 70S ribosome.

In terms of biological role, located at the top of the head of the 30S subunit, it contacts several helices of the 16S rRNA. In the 70S ribosome it contacts the 23S rRNA (bridge B1a) and protein L5 of the 50S subunit (bridge B1b), connecting the 2 subunits; these bridges are implicated in subunit movement. Contacts the tRNAs in the A and P-sites. This chain is Small ribosomal subunit protein uS13, found in Blochmanniella floridana.